The primary structure comprises 139 residues: MASTFVCSLPNPFFAFPVKATTPSTANHTLLGSRRGCLRIKAISTKWEPTKVVPQADRVLVRLEDLPIKSSGGVLLPKAAVKFERYLTGEIISVGSEVGQQVGPGKRVLFSDVSAYEVDLGTDARHCFCKESDLLALVE.

The transit peptide at 1 to 39 directs the protein to the chloroplast; it reads MASTFVCSLPNPFFAFPVKATTPSTANHTLLGSRRGCLR. The segment at 51 to 138 is cpn-10 domain; that stretch reads KVVPQADRVL…CKESDLLALV (88 aa).

This sequence belongs to the GroES chaperonin family. As to expression, expressed in leaves and stems. Expressed at low levels in germinating seeds, seedlings, rosettes leaves, flowers and siliques.

It localises to the plastid. Its subcellular location is the chloroplast stroma. Functionally, functions as a co-chaperone for protein folding in chloroplasts. The chain is 10 kDa chaperonin 2, chloroplastic from Arabidopsis thaliana (Mouse-ear cress).